The primary structure comprises 341 residues: NADH-quinone oxidoreductase subunit H 1 (341 aa).

A run of 8 helical transmembrane segments spans residues 13 to 33 (LVVIGQSLLLLILLLITIAYI), 82 to 102 (GVFLLAPLVSCVLALAAWAVI), 115 to 135 (VGVLYILAVSSLSVYGIIMAG), 161 to 181 (IGFVIIAVLLCVGSLNLTAIV), 190 to 210 (LLGWYWLPLFPVFVIFYVSAL), 248 to 268 (YVAITTMCAMGAILFLGGWLP), 277 to 297 (WVPGIIWFMLKGFFMFFLFAM), and 317 to 337 (VFLPLSLVMVVIVAGVLQFAG).

It belongs to the complex I subunit 1 family. NDH-1 is composed of 14 different subunits. Subunits NuoA, H, J, K, L, M, N constitute the membrane sector of the complex.

Its subcellular location is the cell inner membrane. The catalysed reaction is a quinone + NADH + 5 H(+)(in) = a quinol + NAD(+) + 4 H(+)(out). Its function is as follows. NDH-1 shuttles electrons from NADH, via FMN and iron-sulfur (Fe-S) centers, to quinones in the respiratory chain. The immediate electron acceptor for the enzyme in this species is believed to be ubiquinone. Couples the redox reaction to proton translocation (for every two electrons transferred, four hydrogen ions are translocated across the cytoplasmic membrane), and thus conserves the redox energy in a proton gradient. This subunit may bind ubiquinone. The sequence is that of NADH-quinone oxidoreductase subunit H 1 from Rhodopseudomonas palustris (strain BisB18).